We begin with the raw amino-acid sequence, 1009 residues long: Adhesion G-protein coupled receptor G2 (1009 aa).

Residues 1 to 37 (MLFSGGQYSPVGRPEEVLLIYKIFLVIICFHVILVTS) form the signal peptide. Residues 38-617 (LKENGNSSLL…SRTSLPPSQM (580 aa)) lie on the Extracellular side of the membrane. N-linked (GlcNAc...) asparagine glycans are attached at residues asparagine 43, asparagine 77, asparagine 91, asparagine 103, asparagine 109, asparagine 127, asparagine 136, asparagine 154, asparagine 178, and asparagine 186. Disordered stretches follow at residues 279 to 305 (MTPS…ASSP) and 325 to 346 (SHTL…PSVP). The span at 280–293 (TPSTPSLTQESNLP) shows a compositional bias: polar residues. Residues asparagine 362, asparagine 427, asparagine 448, asparagine 453, asparagine 520, asparagine 534, asparagine 539, asparagine 543, and asparagine 589 are each glycosylated (N-linked (GlcNAc...) asparagine). One can recognise a GAIN-B domain in the interval 453-611 (NTTTFAAQDP…GILLDLSRTS (159 aa)). Disulfide bonds link cysteine 562-cysteine 593 and cysteine 581-cysteine 595. The tract at residues 562–611 (CVFWDLGRNGGKGGWSSDGCSVKDKRMNETICTCSHLTSFGILLDLSRTS) is GPS. A stachel region spans residues 600–611 (SFGILLDLSRTS). A helical transmembrane segment spans residues 618–640 (MALTFITYIGCGLSSIFLSVTLV). The Cytoplasmic portion of the chain corresponds to 641–655 (TYIAFEKIRRDYPSK). The chain crosses the membrane as a helical span at residues 656 to 679 (ILIQLCAALLLLNLIFLLDSWIAL). Over 680–683 (YNTR) the chain is Extracellular. The helical transmembrane segment at 684 to 709 (GFCIAVAVFLHYFLLVSFTWMGLEAF) threads the bilayer. An intrachain disulfide couples cysteine 686 to cysteine 770. The Cytoplasmic segment spans residues 710-728 (HMYLALVKVFNTYIRKYIL). Residues 729–751 (KFCIVGWGIPAVVVSIVLTISPD) form a helical membrane-spanning segment. Over 752–776 (NYGIGSYGKFPNGTPDDFCWINSNV) the chain is Extracellular. A helical membrane pass occupies residues 777–802 (VFYITVVGYFCVIFLLNVSMFIVVLV). Topologically, residues 803-823 (QLCRIKKKKQLGAQRKTSIQD) are cytoplasmic. The chain crosses the membrane as a helical span at residues 824-845 (LRSIAGLTFLLGITWGFAFFAW). Topologically, residues 846 to 850 (GPVNV) are extracellular. N-linked (GlcNAc...) asparagine glycosylation occurs at asparagine 849. Residues 851–872 (TFMYLFAIFNTLQGFFIFIFYC) form a helical membrane-spanning segment. Asparagine 860 contributes to the 3beta-hydroxyandrost-5-en-17-one binding site. The Cytoplasmic segment spans residues 873 to 1009 (AAKENVRKQW…RGSLHFIEQM (137 aa)). At serine 1002 the chain carries Phosphoserine.

Belongs to the G-protein coupled receptor 2 family. Adhesion G-protein coupled receptor (ADGR) subfamily. In terms of assembly, heterodimer of 2 chains generated by proteolytic processing; the large extracellular N-terminal fragment and the membrane-bound C-terminal fragment predominantly remain associated and non-covalently linked. Interacts with CFTR. In terms of processing, proteolytically cleaved into 2 subunits, an extracellular subunit and a seven-transmembrane subunit. Highly glycosylated. As to expression, epididymis-specific expression (at protein level). Associated with apical membranes of efferent ductule and proximal epididymal duct epithelia. Mainly expressed in the nonciliated principal cells of the proximal excurrent ducts.

The protein resides in the apical cell membrane. Forms a heterodimer of 2 chains generated by proteolytic processing that remain associated through non-covalent interactions mediated by the GAIN-B domain. In the inactivated receptor, the Stachel sequence (also named stalk) is embedded in the GAIN-B domain, where it adopts a beta-strand conformation. On activation, the Stachel moves into the 7 transmembrane region and adopts a twisted hook-shaped configuration that forms contacts within the receptor, leading to coupling of a G-alpha protein, which activates signaling. The cleaved GAIN-B and N-terminal domains can then dissociate from the rest of the receptor. Deoxycorticosterone (DOC) acts as an antagonist of ADGRG2. Functionally, adhesion G-protein coupled receptor (aGPCR) for steroid hormones, such as dehydroepiandrosterone (DHEA; also named 3beta-hydroxyandrost-5-en-17-one) and androstenedione. Involved in a signal transduction pathway controlling epididymal function and male fertility. Ligand binding causes a conformation change that triggers signaling via guanine nucleotide-binding proteins (G proteins) and modulates the activity of downstream effectors, such as adenylate cyclase. ADGRG2 is coupled to G(s) G proteins and mediates activation of adenylate cyclase activity. Also able to couple with G(q) G proteins in vitro. May regulate fluid exchange within epididymis. In Mus musculus (Mouse), this protein is Adhesion G-protein coupled receptor G2.